Here is a 231-residue protein sequence, read N- to C-terminus: DNA mismatch repair protein MutH (231 aa).

The protein belongs to the MutH family.

The protein localises to the cytoplasm. In terms of biological role, sequence-specific endonuclease that cleaves unmethylated GATC sequences. It is involved in DNA mismatch repair. This is DNA mismatch repair protein MutH from Salmonella paratyphi C (strain RKS4594).